We begin with the raw amino-acid sequence, 612 residues long: uncharacterized protein (612 aa).

Residues 39–100 (ERDHNLWEIE…KNISVKDLDE (62 aa)) are a coiled coil. A disordered region spans residues 219–241 (PLSSGESLPKKEEEVTKSPSFTL). WD repeat units lie at residues 286 to 325 (TSTQCITHQPLPGSTPSFASGTENGVINVWRLDEDSNDNS), 337 to 376 (GHEGPVLCVCVPKATHHIFSGGHDGTIRCWSLPANQTSDS), 389 to 432 (GHED…FKIR), 434 to 470 (DSKQPLSMSVTDSRIAIAYNDGNVRFYDLDTQILVSQ), 483 to 523 (AVKD…LLAE), 526 to 565 (ISKVSLTGIAFAVNRPEFAISASDGRVFFLRQDDKLSTLE), and 574 to 612 (EEITDLSDILWINSPVDKLEHLIVGCKERISVYDRKYLP).

The protein localises to the cytoplasm. This is an uncharacterized protein from Schizosaccharomyces pombe (strain 972 / ATCC 24843) (Fission yeast).